Reading from the N-terminus, the 133-residue chain is Ribosome-binding factor A (133 aa).

It belongs to the RbfA family. In terms of assembly, monomer. Binds 30S ribosomal subunits, but not 50S ribosomal subunits or 70S ribosomes.

It is found in the cytoplasm. One of several proteins that assist in the late maturation steps of the functional core of the 30S ribosomal subunit. Associates with free 30S ribosomal subunits (but not with 30S subunits that are part of 70S ribosomes or polysomes). Required for efficient processing of 16S rRNA. May interact with the 5'-terminal helix region of 16S rRNA. This chain is Ribosome-binding factor A, found in Synechocystis sp. (strain ATCC 27184 / PCC 6803 / Kazusa).